Reading from the N-terminus, the 365-residue chain is Chorismate synthase (365 aa).

The NADP(+) site is built by Arg-48 and Arg-54. Residues 125–127 (RSS), 237–238 (NA), Gly-277, 292–296 (KPTSS), and Arg-318 contribute to the FMN site.

This sequence belongs to the chorismate synthase family. As to quaternary structure, homotetramer. FMNH2 is required as a cofactor.

The catalysed reaction is 5-O-(1-carboxyvinyl)-3-phosphoshikimate = chorismate + phosphate. Its pathway is metabolic intermediate biosynthesis; chorismate biosynthesis; chorismate from D-erythrose 4-phosphate and phosphoenolpyruvate: step 7/7. Functionally, catalyzes the anti-1,4-elimination of the C-3 phosphate and the C-6 proR hydrogen from 5-enolpyruvylshikimate-3-phosphate (EPSP) to yield chorismate, which is the branch point compound that serves as the starting substrate for the three terminal pathways of aromatic amino acid biosynthesis. This reaction introduces a second double bond into the aromatic ring system. This Paracidovorax citrulli (strain AAC00-1) (Acidovorax citrulli) protein is Chorismate synthase.